The sequence spans 84 residues: CDC42 small effector protein 2 (84 aa).

Residues Cys-10 and Cys-11 are each lipidated (S-palmitoyl cysteine). Positions 29–42 constitute a CRIB domain; it reads IGEPTNFVHTAHVG. Ser-43 and Ser-52 each carry phosphoserine.

It belongs to the CDC42SE/SPEC family. In terms of assembly, interacts with CDC42 (in GTP-bound form). Interacts weakly with RAC1 and not at all with RHOA. Widely expressed. Expressed at higher level in T-lymphocytes. Highly expressed in CCRF-CEM T-lymphocytes, Jurkat T-lymphocytes, and Raji B-lymphocytes compared (at protein level).

The protein localises to the cytoplasm. It is found in the cytoskeleton. Its subcellular location is the cell membrane. The protein resides in the cell projection. It localises to the phagocytic cup. Its function is as follows. Probably involved in the organization of the actin cytoskeleton by acting downstream of CDC42, inducing actin filament assembly. Alters CDC42-induced cell shape changes. In activated T-cells, may play a role in CDC42-mediated F-actin accumulation at the immunological synapse. May play a role in early contractile events in phagocytosis in macrophages. The protein is CDC42 small effector protein 2 (CDC42SE2) of Homo sapiens (Human).